Consider the following 106-residue polypeptide: Small ribosomal subunit protein uS10 (106 aa).

Belongs to the universal ribosomal protein uS10 family. As to quaternary structure, part of the 30S ribosomal subunit.

In terms of biological role, involved in the binding of tRNA to the ribosomes. In Archaeoglobus fulgidus (strain ATCC 49558 / DSM 4304 / JCM 9628 / NBRC 100126 / VC-16), this protein is Small ribosomal subunit protein uS10.